The following is a 191-amino-acid chain: Thymidine kinase (191 aa).

ATP-binding positions include 15-22 (GPMYSGKT) and 88-91 (DEAQ). The active-site Proton acceptor is Glu-89. 4 residues coordinate Zn(2+): Cys-145, Cys-148, Cys-183, and Cys-186.

It belongs to the thymidine kinase family. In terms of assembly, homotetramer.

The protein resides in the cytoplasm. It carries out the reaction thymidine + ATP = dTMP + ADP + H(+). In Clostridium botulinum (strain Hall / ATCC 3502 / NCTC 13319 / Type A), this protein is Thymidine kinase.